The chain runs to 94 residues: Acylphosphatase (94 aa).

The Acylphosphatase-like domain maps to 8–94; that stretch reads RLTAWVHGRV…REQITGFHER (87 aa). Residues Arg23 and Asn41 contribute to the active site.

This sequence belongs to the acylphosphatase family.

It catalyses the reaction an acyl phosphate + H2O = a carboxylate + phosphate + H(+). This is Acylphosphatase (acyP) from Mycobacterium sp. (strain KMS).